We begin with the raw amino-acid sequence, 166 residues long: Transcriptional repressor NrdR (166 aa).

Residues 3–34 (CPFCGHDDTQVKDSRSTEDGVAIRRRRVCSAC) fold into a zinc finger. Residues 49–139 (LSVTKADGRR…VYRDFREVEA (91 aa)) form the ATP-cone domain. Positions 146–166 (DMKPIPGETDTPSPDDSQETP) are disordered.

It belongs to the NrdR family. The cofactor is Zn(2+).

Its function is as follows. Negatively regulates transcription of bacterial ribonucleotide reductase nrd genes and operons by binding to NrdR-boxes. This chain is Transcriptional repressor NrdR, found in Gluconobacter oxydans (strain 621H) (Gluconobacter suboxydans).